Here is a 332-residue protein sequence, read N- to C-terminus: Cytoskeleton protein RodZ (332 aa).

Residues 1 to 111 are Cytoplasmic-facing; the sequence is MNTETTQDTT…LKKSRKKRDG (111 aa). The HTH cro/C1-type domain maps to 19–71; that stretch reads LREARERLGLTQQTIAERLCLKITTVRDIEDGTTPADLAPTFLRGYIRSYAKL. Positions 30–49 form a DNA-binding region, H-T-H motif; it reads QQTIAERLCLKITTVRDIED. A helical; Signal-anchor for type II membrane protein transmembrane segment spans residues 112–132; that stretch reads WLMIITWLVVLVVLGLTGAWW. Over 133 to 332 the chain is Periplasmic; the sequence is WQNHQAQQAE…QVARLTLTAE (200 aa). The tract at residues 149 to 225 is disordered; the sequence is HASSMQSQTE…PSQANATQSQ (77 aa). 2 stretches are compositionally biased toward polar residues: residues 151-160 and 168-182; these read SSMQSQTEGQ and SAPQ…AATP. Residues 190-225 are compositionally biased toward low complexity; sequence SATIAATPSTPPSSTTASSAAPSSQSPSQANATQSQ.

The protein belongs to the RodZ family.

It is found in the cell inner membrane. Cytoskeletal protein that is involved in cell-shape control through regulation of the length of the long axis. This chain is Cytoskeleton protein RodZ, found in Pectobacterium atrosepticum (strain SCRI 1043 / ATCC BAA-672) (Erwinia carotovora subsp. atroseptica).